The primary structure comprises 219 residues: 3-dehydroquinate dehydratase (219 aa).

3-dehydroquinate is bound by residues 34 to 36 and R63; that span reads ELR. H114 functions as the Proton donor/acceptor in the catalytic mechanism. The active-site Schiff-base intermediate with substrate is K139. Residues R174, T193, and Q197 each contribute to the 3-dehydroquinate site.

This sequence belongs to the type-I 3-dehydroquinase family. In terms of assembly, homodimer.

The enzyme catalyses 3-dehydroquinate = 3-dehydroshikimate + H2O. Its pathway is metabolic intermediate biosynthesis; chorismate biosynthesis; chorismate from D-erythrose 4-phosphate and phosphoenolpyruvate: step 3/7. Its function is as follows. Involved in the third step of the chorismate pathway, which leads to the biosynthesis of aromatic amino acids. Catalyzes the cis-dehydration of 3-dehydroquinate (DHQ) and introduces the first double bond of the aromatic ring to yield 3-dehydroshikimate. The sequence is that of 3-dehydroquinate dehydratase from Sulfolobus acidocaldarius (strain ATCC 33909 / DSM 639 / JCM 8929 / NBRC 15157 / NCIMB 11770).